We begin with the raw amino-acid sequence, 418 residues long: Actin-related protein 3 (418 aa).

This sequence belongs to the actin family. ARP3 subfamily. As to quaternary structure, component of the Arp2/3 complex.

Its subcellular location is the cytoplasm. It localises to the cytoskeleton. Functions as ATP-binding component of the Arp2/3 complex which is involved in regulation of actin polymerization and together with an activating nucleation-promoting factor (NPF) mediates the formation of branched actin networks. Seems to contact the pointed end of the daughter actin filament. Required during embryogenesis for the developmental migration of tail hemocytes anteriorly, along the ventral midline. The sequence is that of Actin-related protein 3 from Drosophila melanogaster (Fruit fly).